We begin with the raw amino-acid sequence, 380 residues long: GDP-mannose:cellobiosyl-diphosphopolyprenol alpha-mannosyltransferase (380 aa).

This sequence belongs to the glycosyltransferase group 1 family. Glycosyltransferase 4 subfamily.

The enzyme catalyses beta-D-Glc-(1-&gt;4)-alpha-D-Glc-di-trans,octa-cis-undecaprenyl diphosphate + GDP-alpha-D-mannose = alpha-D-Man-(1-&gt;3)-beta-D-Glc-(1-&gt;4)-alpha-D-Glc-1-di-trans,octa-cis-undecaprenyl diphosphate + GDP + H(+). Functionally, involved in the biosynthesis of the exopolysaccharide xanthan, a polymer that is comprised of repeating pentasaccharide units with the structure of a beta-(1,4)-linked D-glucose backbone with trisaccharide side chains composed of mannose-beta-(1,4)-glucuronic acid-beta-(1,2)-mannose attached to alternate glucose residues in the backbone by alpha-(1,3) linkages. Xanthan is involved in pathogenicity but has also been used in a variety of applications as a specialty polymer for commercial applications, including food additives, where they act as viscosifying, stabilizing, emulsifying, or gelling agents. The chain is GDP-mannose:cellobiosyl-diphosphopolyprenol alpha-mannosyltransferase (gumH) from Xanthomonas oryzae pv. oryzae (strain PXO99A).